Consider the following 156-residue polypeptide: ATP synthase subunit b (156 aa).

Residues 7 to 27 traverse the membrane as a helical segment; it reads LFVQAIVFLILVWFTMQFVWP.

It belongs to the ATPase B chain family. In terms of assembly, F-type ATPases have 2 components, F(1) - the catalytic core - and F(0) - the membrane proton channel. F(1) has five subunits: alpha(3), beta(3), gamma(1), delta(1), epsilon(1). F(0) has three main subunits: a(1), b(2) and c(10-14). The alpha and beta chains form an alternating ring which encloses part of the gamma chain. F(1) is attached to F(0) by a central stalk formed by the gamma and epsilon chains, while a peripheral stalk is formed by the delta and b chains.

The protein localises to the cell inner membrane. F(1)F(0) ATP synthase produces ATP from ADP in the presence of a proton or sodium gradient. F-type ATPases consist of two structural domains, F(1) containing the extramembraneous catalytic core and F(0) containing the membrane proton channel, linked together by a central stalk and a peripheral stalk. During catalysis, ATP synthesis in the catalytic domain of F(1) is coupled via a rotary mechanism of the central stalk subunits to proton translocation. In terms of biological role, component of the F(0) channel, it forms part of the peripheral stalk, linking F(1) to F(0). This Verminephrobacter eiseniae (strain EF01-2) protein is ATP synthase subunit b.